A 181-amino-acid polypeptide reads, in one-letter code: Proteinase inhibitor B (181 aa).

Positions 1–24 are cleaved as a signal peptide; it reads MAASNALLLISGALLISLAVLCQG. Intrachain disulfides connect Cys-67/Cys-113, Cys-134/Cys-143, and Cys-136/Cys-139.

It belongs to the protease inhibitor I3 (leguminous Kunitz-type inhibitor) family.

The protein localises to the secreted. Its function is as follows. Possesses two reactive sites. Inhibits two molecules of trypsin simultaneously. Inhibits efficiently kallikrein, but chymotrypsin weakly. In Sagittaria sagittifolia (Arrowhead), this protein is Proteinase inhibitor B.